The chain runs to 227 residues: Response regulator protein TodT (227 aa).

The 115-residue stretch at 28–142 folds into the Response regulatory domain; it reads VIYILDDDNA…ELLGAIRAAL (115 aa). Aspartate 77 bears the 4-aspartylphosphate mark. The 66-residue stretch at 158–223 folds into the HTH luxR-type domain; the sequence is LKENYESLSK…DLVRVTERLK (66 aa). The H-T-H motif DNA-binding region spans 182-201; that stretch reads NKQTALELDISEATVKVHRH.

Phosphorylated by TodS.

The protein resides in the cytoplasm. Its function is as follows. Member of the two-component regulatory system TodS/TodT involved in the regulation of toluene degradation. Phosphorylated TodT activates transcription of the tod operon (todXFC1C2BADEGIH). Binds specifically to a 6-bp palindromic DNA structure in the tod promoter region. This Pseudomonas putida (strain ATCC 700007 / DSM 6899 / JCM 31910 / BCRC 17059 / LMG 24140 / F1) protein is Response regulator protein TodT (todT).